Reading from the N-terminus, the 199-residue chain is MKFSPLVDELIQALKGLPGVGPKSAQRMAFNLLERDRKVGLKLAESLKNAMTDVGHCQSCRTFTEQSLCPICASHKRGASGVICVVETPADVLAIEAGGHFNGRYFVLLGHLSPLDGVGPEELGLSLLEQHLQTLDVTELILATNPTVEGDATAHFIADMARRHKVIISRIAHGVPVGGELEYVDSTTLALSFNGRIAL.

The C4-type zinc-finger motif lies at 57–72; sequence CQSCRTFTEQSLCPIC. The 96-residue stretch at 81 to 176 folds into the Toprim domain; sequence GVICVVETPA…IISRIAHGVP (96 aa).

The protein belongs to the RecR family.

May play a role in DNA repair. It seems to be involved in an RecBC-independent recombinational process of DNA repair. It may act with RecF and RecO. The polypeptide is Recombination protein RecR (Shewanella denitrificans (strain OS217 / ATCC BAA-1090 / DSM 15013)).